A 1369-amino-acid polypeptide reads, in one-letter code: Rho guanine nucleotide exchange factor 10 (1369 aa).

The disordered stretch occupies residues 1–106; sequence MRPPGFLSRA…ETTPVAEPTK (106 aa). A compositionally biased stretch (acidic residues) spans 46 to 64; that stretch reads NNEEEEGEQFDFDSGDEIP. A compositionally biased stretch (low complexity) spans 83–100; that stretch reads EAPAPTGGEDGAGAETTP. S180 carries the phosphoserine modification. Positions 184 to 254 are disordered; that stretch reads EAETPEVTED…ENSDSEPDEM (71 aa). A compositionally biased stretch (polar residues) spans 196-209; that stretch reads PNSLSSEEPPTSED. Positions 304–355 form a coiled coil; it reads KKQLSHDLTRLKEHYEKKMRDLMASTVGVVEIQQLRQKHELKMQKLVKAAKD. S379 is modified (phosphoserine). The region spanning 421-608 is the DH domain; sequence VRRYILGSVV…ETLAEKLNER (188 aa). 2 disordered regions span residues 1226–1260 and 1277–1297; these read KDKS…LSQG and QKSD…SSSL. Residues 1279–1296 show a composition bias toward low complexity; the sequence is SDLSSSSGSLSLSHGSSS. At S1287 the chain carries Phosphoserine. The residue at position 1338 (Q1338) is an N5-methylglutamine.

Post-translationally, methylated at Gln-1338 by N6AMT1.

In terms of biological role, may play a role in developmental myelination of peripheral nerves. The polypeptide is Rho guanine nucleotide exchange factor 10 (ARHGEF10) (Homo sapiens (Human)).